The sequence spans 258 residues: uncharacterized protein (258 aa).

This is an uncharacterized protein from Streptococcus pneumoniae serotype 4 (strain ATCC BAA-334 / TIGR4).